An 84-amino-acid chain; its full sequence is UPF0248 protein PF1300 (84 aa).

This sequence belongs to the UPF0248 family.

This Pyrococcus furiosus (strain ATCC 43587 / DSM 3638 / JCM 8422 / Vc1) protein is UPF0248 protein PF1300.